Here is an 806-residue protein sequence, read N- to C-terminus: DNA topoisomerase 1 (806 aa).

A compositionally biased stretch (low complexity) spans 1–15 (MSVVSNHHSNGNGNS). The segment at 1–236 (MSVVSNHHSN…KKEPPKKKVK (236 aa)) is disordered. Over residues 24-34 (DEIKKEVKDEP) the composition is skewed to basic and acidic residues. Composition is skewed to basic residues over residues 49–60 (RDKKEKKQKKRK) and 98–108 (EKKKSKKNNKK). Over residues 113 to 127 (SSEDDDEESEGDVSE) the composition is skewed to acidic residues. Over residues 128–137 (EDVKPQIHSD) the composition is skewed to basic and acidic residues. Acidic residues predominate over residues 138–153 (DELEEEDEAPTTDDEE). Positions 159–176 (EKERRKKEKREKKERKEK) are enriched in basic residues. Residues 177–188 (KRLEKENRKIKE) are compositionally biased toward basic and acidic residues. Positions 189–199 (EDDEDSDDEDD) are enriched in acidic residues. The span at 210–229 (KGAEKSKPSTSKKDAGGKKE) shows a compositional bias: basic and acidic residues. 3 interaction with DNA regions span residues 467–468 (KY), 530–535 (RAGNEK), and 634–636 (TVK). The Topo IB-type catalytic domain maps to 474–803 (SSKIKGEKDF…IDMTNSSDEE (330 aa)). Tyrosine 761 acts as the O-(3'-phospho-DNA)-tyrosine intermediate in catalysis.

It belongs to the type IB topoisomerase family. As to expression, expressed in male germ cells and in mature sperm.

It localises to the nucleus. Its subcellular location is the nucleolus. It is found in the chromosome. The enzyme catalyses ATP-independent breakage of single-stranded DNA, followed by passage and rejoining.. Releases the supercoiling and torsional tension of DNA introduced during the DNA replication and transcription by transiently cleaving and rejoining one strand of the DNA duplex. Introduces a single-strand break via transesterification at a target site in duplex DNA. The scissile phosphodiester is attacked by the catalytic tyrosine of the enzyme, resulting in the formation of a DNA-(3'-phosphotyrosyl)-enzyme intermediate and the expulsion of a 5'-OH DNA strand. The free DNA strand then rotates around the intact phosphodiester bond on the opposing strand, thus removing DNA supercoils. Finally, in the religation step, the DNA 5'-OH attacks the covalent intermediate to expel the active-site tyrosine and restore the DNA phosphodiester backbone. Required for normal spermatogenesis and oogenesis. The chain is DNA topoisomerase 1 (top-1) from Caenorhabditis elegans.